The primary structure comprises 157 residues: Ribosomal RNA large subunit methyltransferase H (157 aa).

S-adenosyl-L-methionine-binding positions include Leu-73, Gly-105, and Leu-124–Phe-129.

The protein belongs to the RNA methyltransferase RlmH family. Homodimer.

It localises to the cytoplasm. The catalysed reaction is pseudouridine(1915) in 23S rRNA + S-adenosyl-L-methionine = N(3)-methylpseudouridine(1915) in 23S rRNA + S-adenosyl-L-homocysteine + H(+). Specifically methylates the pseudouridine at position 1915 (m3Psi1915) in 23S rRNA. This is Ribosomal RNA large subunit methyltransferase H from Porphyromonas gingivalis (strain ATCC 33277 / DSM 20709 / CIP 103683 / JCM 12257 / NCTC 11834 / 2561).